The primary structure comprises 450 residues: Deoxyguanosinetriphosphate triphosphohydrolase-like protein (450 aa).

The region spanning 61–274 is the HD domain; that stretch reads RLTHSLEVAQ…MELADDIAYA (214 aa).

It belongs to the dGTPase family. Type 2 subfamily.

In Histophilus somni (strain 2336) (Haemophilus somnus), this protein is Deoxyguanosinetriphosphate triphosphohydrolase-like protein.